Reading from the N-terminus, the 99-residue chain is Small ribosomal subunit protein bS18 (99 aa).

Basic and acidic residues predominate over residues 1–25; that stretch reads MAEDHPSVDLDTHLSSPRESEESAP. The segment at 1–28 is disordered; the sequence is MAEDHPSVDLDTHLSSPRESEESAPKKN.

Belongs to the bacterial ribosomal protein bS18 family. In terms of assembly, part of the 30S ribosomal subunit. Forms a tight heterodimer with protein bS6.

Binds as a heterodimer with protein bS6 to the central domain of the 16S rRNA, where it helps stabilize the platform of the 30S subunit. The chain is Small ribosomal subunit protein bS18 from Treponema pallidum (strain Nichols).